Reading from the N-terminus, the 498-residue chain is Phosphatidylserine synthase (498 aa).

The disordered stretch occupies residues 1 to 65 (MKKRTNSRGT…GSVSSAGARR (65 aa)). Residues 1–92 (MKKRTNSRGT…VDDISLDFFY (92 aa)) are Cytoplasmic-facing. The segment covering 7 to 25 (SRGTPTSSGDALLDTSFSS) has biased composition (polar residues). A helical membrane pass occupies residues 93–113 (KPHTITLLAVSVLAVMYFAFV). Over 114 to 122 (RNEANVDEN) the chain is Lumenal. The helical transmembrane segment at 123 to 143 (LWAGLLCIVFFFLIVSVIAFP) threads the bilayer. Topologically, residues 144–153 (NGPFTRPHPA) are cytoplasmic. Residues 154–174 (VWRILFGCSVLYLLTLQFLMF) traverse the membrane as a helical segment. Residues 175-239 (QNYPTIRSIF…AFKAILIRHM (65 aa)) lie on the Lumenal side of the membrane. N205 carries N-linked (GlcNAc...) asparagine glycosylation. The chain crosses the membrane as a helical span at residues 240 to 260 (GILWAISVMWEITEITFAHLL). The Cytoplasmic portion of the chain corresponds to 261 to 266 (PNFIEC). Residues 267 to 287 (WWDALILDVIICNGLGIWMGL) form a helical membrane-spanning segment. Topologically, residues 288 to 339 (KICQILEMREYKWASIKDISTTTGKIKRAMLQFTPESWSAIRWLDPKSTAMR) are lumenal. Residues 340–360 (FAAVIQLVIFWQVTELNTFFL) traverse the membrane as a helical segment. Topologically, residues 361-367 (KHIFEMP) are cytoplasmic. The chain crosses the membrane as a helical span at residues 368-388 (PDHFIVIGRLIFIGLFVAPSV). Topologically, residues 389–402 (RQYYVYVTDTRCKR) are lumenal. A helical membrane pass occupies residues 403–423 (VGTQCWVYGAIMVSEAILCIK). Topologically, residues 424–436 (NGKELFERTQAIN) are cytoplasmic. The chain crosses the membrane as a helical span at residues 437-457 (IVLWLTVQVIISVAFVYLAVY). At 458–498 (WQQRQLKKVSSTPAKTKETIPASSSSPSKGKLSPQKEKKLK) the chain is on the lumenal side. The interval 465–498 (KVSSTPAKTKETIPASSSSPSKGKLSPQKEKKLK) is disordered. Residues 478–490 (PASSSSPSKGKLS) show a composition bias toward low complexity.

Belongs to the phosphatidyl serine synthase family.

It localises to the endoplasmic reticulum membrane. The catalysed reaction is a 1,2-diacyl-sn-glycero-3-phosphoethanolamine + L-serine = a 1,2-diacyl-sn-glycero-3-phospho-L-serine + ethanolamine. It functions in the pathway phospholipid metabolism; phosphatidylserine biosynthesis. Catalyzes a base-exchange reaction in which the polar head group of phosphatidylethanolamine (PE) is replaced by L-serine. This chain is Phosphatidylserine synthase, found in Drosophila melanogaster (Fruit fly).